The chain runs to 187 residues: UPF0340 protein SP70585_0722 (187 aa).

Belongs to the UPF0340 family.

This is UPF0340 protein SP70585_0722 from Streptococcus pneumoniae (strain 70585).